Here is a 157-residue protein sequence, read N- to C-terminus: Small ribosomal subunit protein uS7 (157 aa).

It belongs to the universal ribosomal protein uS7 family. In terms of assembly, part of the 30S ribosomal subunit. Contacts proteins S9 and S11.

Its function is as follows. One of the primary rRNA binding proteins, it binds directly to 16S rRNA where it nucleates assembly of the head domain of the 30S subunit. Is located at the subunit interface close to the decoding center, probably blocks exit of the E-site tRNA. The chain is Small ribosomal subunit protein uS7 from Eikenella corrodens.